A 555-amino-acid polypeptide reads, in one-letter code: Potassium-transporting ATPase potassium-binding subunit (555 aa).

A run of 10 helical transmembrane segments spans residues 2-22, 60-80, 130-150, 173-193, 246-266, 278-298, 374-394, 412-432, 483-503, and 525-545; these read IWVA…PTGI, QYAL…YFIF, IGIT…VMAF, VFLP…VPQT, MSNI…PFTY, ILFV…TTSE, AGFV…GLMV, LIAV…ALAL, LVMF…AASL, and GIFI…MLVL.

Belongs to the KdpA family. In terms of assembly, the system is composed of three essential subunits: KdpA, KdpB and KdpC.

Its subcellular location is the cell membrane. Its function is as follows. Part of the high-affinity ATP-driven potassium transport (or Kdp) system, which catalyzes the hydrolysis of ATP coupled with the electrogenic transport of potassium into the cytoplasm. This subunit binds the extracellular potassium ions and delivers the ions to the membrane domain of KdpB through an intramembrane tunnel. The sequence is that of Potassium-transporting ATPase potassium-binding subunit from Bacillus thuringiensis subsp. konkukian (strain 97-27).